The sequence spans 307 residues: uncharacterized protein (307 aa).

The signal sequence occupies residues 1–25 (MKFQKRNIQLVLILLLILNNCFINS). The tract at residues 60 to 90 (ENNNKNNNNNNNNNNNNNNNNKNSKVKNDDS) is disordered. A compositionally biased stretch (low complexity) spans 63 to 82 (NKNNNNNNNNNNNNNNNNKN). Asn124 and Asn173 each carry an N-linked (GlcNAc...) asparagine glycan. The next 2 helical transmembrane spans lie at 244–264 (IIFAITFIIFLFTYLIIYYLA) and 275–295 (IIGVLTVFLWVIITLLFTIVI).

It is found in the membrane. This is an uncharacterized protein from Dictyostelium discoideum (Social amoeba).